The following is a 387-amino-acid chain: Sorting nexin-7 (387 aa).

One can recognise a PX domain in the interval 30–151 (KDLFITVDEP…IFLTAQAWEL (122 aa)). The a 1,2-diacyl-sn-glycero-3-phospho-(1D-myo-inositol-3-phosphate) site is built by R73, Q75, K103, and R117. Positions 178–387 (GVKNRPEEFM…HLEETSEDKP (210 aa)) constitute a BAR domain.

Belongs to the sorting nexin family. Heterodimer; heterodimerizes with SNX4.

The protein resides in the early endosome membrane. Functionally, involved in the regulation of endocytosis and in several stages of intracellular trafficking. Together with SNX4, involved in autophagosome assembly by regulating trafficking and recycling of phospholipid scramblase ATG9A. The sequence is that of Sorting nexin-7 (SNX7) from Macaca fascicularis (Crab-eating macaque).